The primary structure comprises 244 residues: DNA repair protein RecO (244 aa).

Belongs to the RecO family.

In terms of biological role, involved in DNA repair and RecF pathway recombination. The polypeptide is DNA repair protein RecO (Caldicellulosiruptor saccharolyticus (strain ATCC 43494 / DSM 8903 / Tp8T 6331)).